A 346-amino-acid polypeptide reads, in one-letter code: Methylthioribose-1-phosphate isomerase (346 aa).

Substrate contacts are provided by residues 46 to 48 (RGA), R89, and Q196. The Proton donor role is filled by D237. 247–248 (NK) serves as a coordination point for substrate.

This sequence belongs to the eIF-2B alpha/beta/delta subunits family. MtnA subfamily.

The enzyme catalyses 5-(methylsulfanyl)-alpha-D-ribose 1-phosphate = 5-(methylsulfanyl)-D-ribulose 1-phosphate. It functions in the pathway amino-acid biosynthesis; L-methionine biosynthesis via salvage pathway; L-methionine from S-methyl-5-thio-alpha-D-ribose 1-phosphate: step 1/6. Catalyzes the interconversion of methylthioribose-1-phosphate (MTR-1-P) into methylthioribulose-1-phosphate (MTRu-1-P). This is Methylthioribose-1-phosphate isomerase from Geotalea uraniireducens (strain Rf4) (Geobacter uraniireducens).